The following is a 107-amino-acid chain: Thiosulfate sulfurtransferase GlpE (107 aa).

Residues 17–105 (ADDNALLVDI…WRIAFPQQVS (89 aa)) enclose the Rhodanese domain. The active-site Cysteine persulfide intermediate is the Cys65.

Belongs to the GlpE family.

The protein resides in the cytoplasm. The catalysed reaction is thiosulfate + hydrogen cyanide = thiocyanate + sulfite + 2 H(+). It carries out the reaction thiosulfate + [thioredoxin]-dithiol = [thioredoxin]-disulfide + hydrogen sulfide + sulfite + 2 H(+). Its function is as follows. Transferase that catalyzes the transfer of sulfur from thiosulfate to thiophilic acceptors such as cyanide or dithiols. May function in a CysM-independent thiosulfate assimilation pathway by catalyzing the conversion of thiosulfate to sulfite, which can then be used for L-cysteine biosynthesis. This chain is Thiosulfate sulfurtransferase GlpE, found in Erwinia tasmaniensis (strain DSM 17950 / CFBP 7177 / CIP 109463 / NCPPB 4357 / Et1/99).